The sequence spans 389 residues: Phosphoribosylformylglycinamidine cyclo-ligase, chloroplastic (389 aa).

A chloroplast-targeting transit peptide spans 1–58 (MEARILQSSSSCYSSLYAVNRSRFSSVSSPKPFSVSFAQTTRTRTRVLSMSKKDGRTD). Positions 46 to 65 (RVLSMSKKDGRTDKDDDTDS) are disordered.

Belongs to the AIR synthase family.

The protein localises to the plastid. It is found in the chloroplast. The catalysed reaction is 2-formamido-N(1)-(5-O-phospho-beta-D-ribosyl)acetamidine + ATP = 5-amino-1-(5-phospho-beta-D-ribosyl)imidazole + ADP + phosphate + H(+). It participates in purine metabolism; IMP biosynthesis via de novo pathway; 5-amino-1-(5-phospho-D-ribosyl)imidazole from N(2)-formyl-N(1)-(5-phospho-D-ribosyl)glycinamide: step 2/2. The protein is Phosphoribosylformylglycinamidine cyclo-ligase, chloroplastic (PUR5) of Arabidopsis thaliana (Mouse-ear cress).